The sequence spans 575 residues: Arginine--tRNA ligase (575 aa).

The 'HIGH' region motif lies at 122 to 132 (PNVAKEMHVGH).

This sequence belongs to the class-I aminoacyl-tRNA synthetase family. As to quaternary structure, monomer.

The protein localises to the cytoplasm. It catalyses the reaction tRNA(Arg) + L-arginine + ATP = L-arginyl-tRNA(Arg) + AMP + diphosphate. This chain is Arginine--tRNA ligase, found in Actinobacillus succinogenes (strain ATCC 55618 / DSM 22257 / CCUG 43843 / 130Z).